The following is a 344-amino-acid chain: tRNA dimethylallyltransferase (344 aa).

Residue Gly-19 to Thr-26 participates in ATP binding. Thr-21–Thr-26 lines the substrate pocket.

It belongs to the IPP transferase family. Monomer. Requires Mg(2+) as cofactor.

It catalyses the reaction adenosine(37) in tRNA + dimethylallyl diphosphate = N(6)-dimethylallyladenosine(37) in tRNA + diphosphate. Catalyzes the transfer of a dimethylallyl group onto the adenine at position 37 in tRNAs that read codons beginning with uridine, leading to the formation of N6-(dimethylallyl)adenosine (i(6)A). The chain is tRNA dimethylallyltransferase from Bifidobacterium animalis subsp. lactis (strain AD011).